We begin with the raw amino-acid sequence, 100 residues long: Pregnancy-associated protein bPAP (100 aa).

The disordered stretch occupies residues 1–40; it reads DSELAGPRGARGPHGLSGPHGLSGLXGPXGYTGPIGMXGL. The segment covering 13–29 has biased composition (low complexity); sequence PHGLSGPHGLSGLXGPX.

As to expression, detected at high levels in the urine of pregnant females (at protein level) and at far lower levels in the urine of nonpregnant females.

The chain is Pregnancy-associated protein bPAP from Bos taurus (Bovine).